A 142-amino-acid chain; its full sequence is Large ribosomal subunit protein uL13 (142 aa).

It belongs to the universal ribosomal protein uL13 family. Part of the 50S ribosomal subunit.

This protein is one of the early assembly proteins of the 50S ribosomal subunit, although it is not seen to bind rRNA by itself. It is important during the early stages of 50S assembly. This chain is Large ribosomal subunit protein uL13, found in Caldicellulosiruptor bescii (strain ATCC BAA-1888 / DSM 6725 / KCTC 15123 / Z-1320) (Anaerocellum thermophilum).